The sequence spans 586 residues: Assimilatory ferredoxin-dependent nitrite reductase (586 aa).

Positions 411, 417, 455, and 459 each coordinate [4Fe-4S] cluster. Cys-459 contacts siroheme. Positions 566-586 (SWYPFADEDEPPKTEQPMTSD) are disordered.

It belongs to the nitrite and sulfite reductase 4Fe-4S domain family. As to quaternary structure, monomer. Requires siroheme as cofactor. [4Fe-4S] cluster serves as cofactor.

It carries out the reaction 6 oxidized [2Fe-2S]-[ferredoxin] + NH4(+) + 2 H2O = nitrite + 6 reduced [2Fe-2S]-[ferredoxin] + 8 H(+). It participates in nitrogen metabolism; nitrate reduction (assimilation). With respect to regulation, inhibited by cyanide and azide. Catalyzes the reduction of nitrite to ammonium in the nitrate assimilation pathway, using ferredoxin as the electron donor. Can use reduced methyl viologen but neither NADPH nor NADH as electron donors. The chain is Assimilatory ferredoxin-dependent nitrite reductase from Haloferax mediterranei (strain ATCC 33500 / DSM 1411 / JCM 8866 / NBRC 14739 / NCIMB 2177 / R-4) (Halobacterium mediterranei).